The primary structure comprises 146 residues: Holo-[acyl-carrier-protein] synthase (146 aa).

Asp9 and Glu63 together coordinate Mg(2+).

This sequence belongs to the P-Pant transferase superfamily. AcpS family. Mg(2+) is required as a cofactor.

The protein localises to the cytoplasm. It carries out the reaction apo-[ACP] + CoA = holo-[ACP] + adenosine 3',5'-bisphosphate + H(+). In terms of biological role, transfers the 4'-phosphopantetheine moiety from coenzyme A to a Ser of acyl-carrier-protein. This chain is Holo-[acyl-carrier-protein] synthase, found in Burkholderia multivorans (strain ATCC 17616 / 249).